The sequence spans 312 residues: Apulose-4-phosphate transketolase subunit B (312 aa).

The protein belongs to the transketolase family. In terms of assembly, probable heterodimer composed of AptA and AptB. The cofactor is thiamine diphosphate.

It catalyses the reaction apulose 4-phosphate + D-glyceraldehyde 3-phosphate = D-xylulose 5-phosphate + dihydroxyacetone phosphate. It participates in carbohydrate metabolism. In terms of biological role, involved in catabolism of D-apiose. Catalyzes the transfer of the glycolaldehyde group from apulose-4-phosphate to D-glyceraldehyde 3-phosphate, generating dihydroxyacetone phosphate and D-xylulose-5-phosphate. The polypeptide is Apulose-4-phosphate transketolase subunit B (Phocaeicola vulgatus (strain ATCC 8482 / DSM 1447 / JCM 5826 / CCUG 4940 / NBRC 14291 / NCTC 11154) (Bacteroides vulgatus)).